We begin with the raw amino-acid sequence, 1091 residues long: Voltage-dependent calcium channel subunit alpha-2/delta-3 (1091 aa).

Residues 1–28 form the signal peptide; it reads MAGPGSPRRASRGASALLAAALLYAALG. Residues 29 to 1068 lie on the Extracellular side of the membrane; that stretch reads DVVRSEQQIP…HPEENARECG (1040 aa). Asn166 carries N-linked (GlcNAc...) asparagine glycosylation. Residues 256 to 438 enclose the VWFA domain; that stretch reads DVVILVDVSG…ENVMEYLHVL (183 aa). Residues Asp262, Ser264, and Ser266 each coordinate a divalent metal cation. Positions 262–266 match the MIDAS-like motif motif; it reads DVSGS. N-linked (GlcNAc...) asparagine glycosylation occurs at Asn309. A disulfide bridge connects residues Cys412 and Cys1055. The region spanning 452–549 is the Cache domain; sequence WTEAYIDSTL…RLLYEEGKKR (98 aa). N-linked (GlcNAc...) asparagine glycosylation is found at Asn553, Asn632, and Asn793. The residue at position 924 (Tyr924) is a Phosphotyrosine. A helical transmembrane segment spans residues 1069-1089; sequence GAPSLQAQTVLLLLPLLLMLF. Topologically, residues 1090–1091 are cytoplasmic; the sequence is SR.

The protein belongs to the calcium channel subunit alpha-2/delta family. In terms of assembly, dimer formed of alpha-2-2 and delta-2 chains; disulfide-linked. Voltage-dependent calcium channels are multisubunit complexes, consisting of alpha-1 (CACNA1), alpha-2 (CACNA2D), beta (CACNB) and delta (CACNA2D) subunits in a 1:1:1:1 ratio. N-glycosylated. In terms of processing, may be proteolytically processed into subunits alpha-2-3 and delta-3 that are disulfide-linked. It is however unclear whether such cleavage really takes place in vivo and has a functional role. Only detected in brain. Not present in lung, testis, aorta, spleen, jejunum, ventricular muscle and kidney (at protein level). According to PubMed:11687876, it is brain-specific, while according to PubMed:11245980, it is widely expressed.

Its subcellular location is the membrane. The alpha-2/delta subunit of voltage-dependent calcium channels regulates calcium current density and activation/inactivation kinetics of the calcium channel. Acts as a regulatory subunit for P/Q-type calcium channel (CACNA1A), N-type (CACNA1B), L-type (CACNA1C OR CACNA1D) but not T-type (CACNA1G). The chain is Voltage-dependent calcium channel subunit alpha-2/delta-3 (CACNA2D3) from Homo sapiens (Human).